Here is a 103-residue protein sequence, read N- to C-terminus: Histone H4 (103 aa).

The span at 1–14 shows a compositional bias: gly residues; it reads MSGRGKGGKGLGKG. The disordered stretch occupies residues 1–20; sequence MSGRGKGGKGLGKGGAKRHR. Ser-2 carries the post-translational modification N-acetylserine. N6-acetyllysine is present on Lys-17. Residues 17–21 mediate DNA binding; it reads KRHRK. Lys-21 bears the N6-methyllysine mark.

This sequence belongs to the histone H4 family. As to quaternary structure, the nucleosome is a histone octamer containing two molecules each of H2A, H2B, H3 and H4 assembled in one H3-H4 heterotetramer and two H2A-H2B heterodimers. The octamer wraps approximately 147 bp of DNA.

The protein resides in the nucleus. It localises to the chromosome. Its function is as follows. Core component of nucleosome. Nucleosomes wrap and compact DNA into chromatin, limiting DNA accessibility to the cellular machineries which require DNA as a template. Histones thereby play a central role in transcription regulation, DNA repair, DNA replication and chromosomal stability. DNA accessibility is regulated via a complex set of post-translational modifications of histones, also called histone code, and nucleosome remodeling. The polypeptide is Histone H4 (Capsicum annuum (Capsicum pepper)).